An 870-amino-acid chain; its full sequence is Pre-mRNA-processing factor 40 homolog B (870 aa).

WW domains lie at 92–125 (GPPRALWSEHVAPDGRIYYYNADDKQSVWEKPSV) and 133–166 (LLSQCPWKEYKSDTGKPYYYNNQSQESRWTRPKD). Residues 146–277 (TGKPYYYNNQ…RSGLSWSNRE (132 aa)) form a disordered region. N6-acetyllysine is present on Lys-148. Lys-175 participates in a covalent cross-link: Glycyl lysine isopeptide (Lys-Gly) (interchain with G-Cter in SUMO2). The span at 182 to 191 (QQTQQLQTLQ) shows a compositional bias: low complexity. The segment covering 192–211 (PQPPQPQPDPPPIPPGPIPV) has biased composition (pro residues). 6 FF domains span residues 276 to 330 (REKA…YKAQ), 340 to 397 (RLRA…VLFF), 410 to 470 (RRRN…HIRA), 490 to 550 (QRKN…YVEE), 554 to 610 (RFHD…LLEK), and 625 to 682 (RMRR…FLQV). A coiled-coil region spans residues 604-640 (FNSLLEKAEARETEREKEEARRMRRREAAFRSMLRQA). The tract at residues 690–870 (HLHTKGRKHG…TLLQQLDDHQ (181 aa)) is disordered. Residues 691–711 (LHTKGRKHGRKGKKHHRKRSH) are compositionally biased toward basic residues. 2 stretches are compositionally biased toward low complexity: residues 739–756 (SESGSEPSSSLDSVESGG) and 764–774 (SPSSHLLLGSD). The residue at position 764 (Ser-764) is a Phosphoserine. The span at 778–794 (RKTKKPKKKTKKRRHKS) shows a compositional bias: basic residues. Positions 804–824 (EDKAGKESEDREQEQDREPRQ) are enriched in basic and acidic residues. The residue at position 831 (Ser-831) is a Phosphoserine. Lys-837 is covalently cross-linked (Glycyl lysine isopeptide (Lys-Gly) (interchain with G-Cter in SUMO2)). Position 851 is a phosphoserine (Ser-851).

It belongs to the PRPF40 family. Interacts with the N-terminus of HD.

It localises to the nucleus speckle. In terms of biological role, may be involved in pre-mRNA splicing. This Mus musculus (Mouse) protein is Pre-mRNA-processing factor 40 homolog B (Prpf40b).